We begin with the raw amino-acid sequence, 178 residues long: NADH-quinone oxidoreductase subunit I 2 (178 aa).

4Fe-4S ferredoxin-type domains lie at 46 to 78 and 88 to 117; these read IVLT…MQAA and AWFR…LTPF. Residues C58, C61, C64, C68, C97, C100, C103, and C107 each contribute to the [4Fe-4S] cluster site.

It belongs to the complex I 23 kDa subunit family. As to quaternary structure, NDH-1 is composed of 14 different subunits. Subunits NuoA, H, J, K, L, M, N constitute the membrane sector of the complex. [4Fe-4S] cluster is required as a cofactor.

It is found in the cell inner membrane. It carries out the reaction a quinone + NADH + 5 H(+)(in) = a quinol + NAD(+) + 4 H(+)(out). NDH-1 shuttles electrons from NADH, via FMN and iron-sulfur (Fe-S) centers, to quinones in the respiratory chain. The immediate electron acceptor for the enzyme in this species is believed to be ubiquinone. Couples the redox reaction to proton translocation (for every two electrons transferred, four hydrogen ions are translocated across the cytoplasmic membrane), and thus conserves the redox energy in a proton gradient. This chain is NADH-quinone oxidoreductase subunit I 2, found in Syntrophobacter fumaroxidans (strain DSM 10017 / MPOB).